The sequence spans 398 residues: Acetate kinase (398 aa).

Residue Asn7 coordinates Mg(2+). Lys14 provides a ligand contact to ATP. Arg91 contributes to the substrate binding site. Asp148 (proton donor/acceptor) is an active-site residue. ATP is bound by residues 208–212, 283–285, and 331–335; these read HLGNG, DFR, and GLGEN. Residue Glu384 coordinates Mg(2+).

Belongs to the acetokinase family. Homodimer. Requires Mg(2+) as cofactor. The cofactor is Mn(2+).

The protein resides in the cytoplasm. The enzyme catalyses acetate + ATP = acetyl phosphate + ADP. The protein operates within metabolic intermediate biosynthesis; acetyl-CoA biosynthesis; acetyl-CoA from acetate: step 1/2. Functionally, catalyzes the formation of acetyl phosphate from acetate and ATP. Can also catalyze the reverse reaction. This is Acetate kinase from Natranaerobius thermophilus (strain ATCC BAA-1301 / DSM 18059 / JW/NM-WN-LF).